We begin with the raw amino-acid sequence, 421 residues long: Nuclear envelope integral membrane protein 2 (421 aa).

The N-terminal stretch at 1-22 (MLPRLWWLVLWLQPLATLPASA) is a signal peptide. 6 helical membrane passes run 64–84 (YMWSTVQVTVTSPGLLNIVYI), 147–167 (NIVDFKLFLVFVTGIFLFLYA), 175–195 (VFYYSSGTVLGILMTLVFVLL), 206–226 (TFGALMIGCWFASVYVLCQLM), 238–258 (MYILGYVVVVGLCSFAACYSH), and 281–301 (LVYTGVAAPQFAYAVLIVLLF).

Belongs to the NEMP family. As to expression, in the ovary, highly expressed in somatic cells.

Its subcellular location is the nucleus inner membrane. The sequence is that of Nuclear envelope integral membrane protein 2 (Nemp2) from Mus musculus (Mouse).